Consider the following 145-residue polypeptide: Basic phospholipase A2 PC17 (145 aa).

The N-terminal stretch at methionine 1–alanine 21 is a signal peptide. A propeptide spanning residues isoleucine 22–leucine 27 is cleaved from the precursor. 7 disulfide bridges follow: cysteine 38/cysteine 98, cysteine 54/cysteine 144, cysteine 56/cysteine 72, cysteine 71/cysteine 125, cysteine 78/cysteine 118, cysteine 87/cysteine 111, and cysteine 105/cysteine 116. The Ca(2+) site is built by tyrosine 55, glycine 57, and glycine 59. The active site involves histidine 75. Residue aspartate 76 coordinates Ca(2+). Residue aspartate 119 is part of the active site.

Belongs to the phospholipase A2 family. Group I subfamily. D49 sub-subfamily. The cofactor is Ca(2+).

The protein resides in the secreted. The catalysed reaction is a 1,2-diacyl-sn-glycero-3-phosphocholine + H2O = a 1-acyl-sn-glycero-3-phosphocholine + a fatty acid + H(+). PLA2 catalyzes the calcium-dependent hydrolysis of the 2-acyl groups in 3-sn-phosphoglycerides. The protein is Basic phospholipase A2 PC17 of Laticauda laticaudata (Blue-ringed sea krait).